The chain runs to 118 residues: Small ribosomal subunit protein uS13 (118 aa).

The segment at 94-118 is disordered; sequence NLPVRGQNTKNNARTRKGPIRSIKR. A compositionally biased stretch (basic residues) spans 106–118; it reads ARTRKGPIRSIKR.

The protein belongs to the universal ribosomal protein uS13 family. As to quaternary structure, part of the 30S ribosomal subunit. Forms a loose heterodimer with protein S19. Forms two bridges to the 50S subunit in the 70S ribosome.

Its function is as follows. Located at the top of the head of the 30S subunit, it contacts several helices of the 16S rRNA. In the 70S ribosome it contacts the 23S rRNA (bridge B1a) and protein L5 of the 50S subunit (bridge B1b), connecting the 2 subunits; these bridges are implicated in subunit movement. Contacts the tRNAs in the A and P-sites. The polypeptide is Small ribosomal subunit protein uS13 (Psychrobacter sp. (strain PRwf-1)).